The following is a 354-amino-acid chain: UDP-N-acetylglucosamine--N-acetylmuramyl-(pentapeptide) pyrophosphoryl-undecaprenol N-acetylglucosamine transferase (354 aa).

UDP-N-acetyl-alpha-D-glucosamine contacts are provided by residues threonine 15–glycine 17, asparagine 127, arginine 163, serine 191, isoleucine 244, alanine 263–glutamate 268, and glutamine 288.

The protein belongs to the glycosyltransferase 28 family. MurG subfamily.

The protein localises to the cell inner membrane. The enzyme catalyses di-trans,octa-cis-undecaprenyl diphospho-N-acetyl-alpha-D-muramoyl-L-alanyl-D-glutamyl-meso-2,6-diaminopimeloyl-D-alanyl-D-alanine + UDP-N-acetyl-alpha-D-glucosamine = di-trans,octa-cis-undecaprenyl diphospho-[N-acetyl-alpha-D-glucosaminyl-(1-&gt;4)]-N-acetyl-alpha-D-muramoyl-L-alanyl-D-glutamyl-meso-2,6-diaminopimeloyl-D-alanyl-D-alanine + UDP + H(+). Its pathway is cell wall biogenesis; peptidoglycan biosynthesis. Cell wall formation. Catalyzes the transfer of a GlcNAc subunit on undecaprenyl-pyrophosphoryl-MurNAc-pentapeptide (lipid intermediate I) to form undecaprenyl-pyrophosphoryl-MurNAc-(pentapeptide)GlcNAc (lipid intermediate II). The protein is UDP-N-acetylglucosamine--N-acetylmuramyl-(pentapeptide) pyrophosphoryl-undecaprenol N-acetylglucosamine transferase of Aliivibrio fischeri (strain MJ11) (Vibrio fischeri).